The primary structure comprises 34 residues: Photosystem II reaction center protein M (34 aa).

The helical transmembrane segment at 5-25 (ILAFIATTLFVLVPTAFLLII) threads the bilayer.

It belongs to the PsbM family. PSII is composed of 1 copy each of membrane proteins PsbA, PsbB, PsbC, PsbD, PsbE, PsbF, PsbH, PsbI, PsbJ, PsbK, PsbL, PsbM, PsbT, PsbX, PsbY, PsbZ, Psb30/Ycf12, at least 3 peripheral proteins of the oxygen-evolving complex and a large number of cofactors. It forms dimeric complexes.

It is found in the plastid. Its subcellular location is the chloroplast thylakoid membrane. Its function is as follows. One of the components of the core complex of photosystem II (PSII). PSII is a light-driven water:plastoquinone oxidoreductase that uses light energy to abstract electrons from H(2)O, generating O(2) and a proton gradient subsequently used for ATP formation. It consists of a core antenna complex that captures photons, and an electron transfer chain that converts photonic excitation into a charge separation. This subunit is found at the monomer-monomer interface. The protein is Photosystem II reaction center protein M of Citrus sinensis (Sweet orange).